We begin with the raw amino-acid sequence, 295 residues long: Ribosomal protein L11 methyltransferase (295 aa).

Residues Thr-138, Gly-161, Asp-183, and Asn-230 each coordinate S-adenosyl-L-methionine.

It belongs to the methyltransferase superfamily. PrmA family.

Its subcellular location is the cytoplasm. The enzyme catalyses L-lysyl-[protein] + 3 S-adenosyl-L-methionine = N(6),N(6),N(6)-trimethyl-L-lysyl-[protein] + 3 S-adenosyl-L-homocysteine + 3 H(+). Methylates ribosomal protein L11. The chain is Ribosomal protein L11 methyltransferase from Rhodopseudomonas palustris (strain BisB5).